The chain runs to 66 residues: MPKQKTHRASAKRFKRTGSGGLKRFRAFTSHRFHGKTKKQRRHLRKASMVSSGDFKRIKAMLTGLK.

A compositionally biased stretch (basic residues) spans 1–16 (MPKQKTHRASAKRFKR). The disordered stretch occupies residues 1–20 (MPKQKTHRASAKRFKRTGSG).

This sequence belongs to the bacterial ribosomal protein bL35 family.

This Streptococcus uberis (strain ATCC BAA-854 / 0140J) protein is Large ribosomal subunit protein bL35.